Consider the following 263-residue polypeptide: Lens fiber major intrinsic protein (263 aa).

At 1-9 (MWELRSASF) the chain is on the cytoplasmic side. Residues 10–29 (WRAIFAEFFATLFYVFFGLG) form a helical membrane-spanning segment. The Extracellular portion of the chain corresponds to 30-41 (ASLRWTPGPLHV). Residues 42–59 (LQVALAFGLALATLVQAV) traverse the membrane as a helical segment. Residues 60–61 (GH) lie on the Cytoplasmic side of the membrane. The discontinuously helical intramembrane region spans 62 to 77 (ISGAHVNPAVTFAFLV). The NPA 1 motif lies at 68-70 (NPA). At 78–82 (GSQMS) the chain is on the cytoplasmic side. Residues 83–106 (LLRAFCYMAAQLLGAVAGAAVLYS) traverse the membrane as a helical segment. Residues 107–127 (VTPPAVRGNLALNTLHPGVSV) are Extracellular-facing. Residues 128 to 148 (GQATTVEIFLTLQFVLCIFAT) form a helical membrane-spanning segment. Residues 149 to 156 (YDERRNGR) are Cytoplasmic-facing. A helical membrane pass occupies residues 157-175 (LGSVALAVGFSLTLGHLFG). The Extracellular segment spans residues 176–178 (MYY). The segment at residues 179–193 (TGAGMNPARSFAPAI) is an intramembrane region (discontinuously helical). The NPA 2 signature appears at 184 to 186 (NPA). Over 194-200 (LTRNFTN) the chain is Extracellular. The helical transmembrane segment at 201-222 (HWVYWVGPIIGGGLGSLLYDFL) threads the bilayer. Residues 223–263 (LFPRLKSVSERLSILKGARPSDSNGQPEGTGEPVELKTQAL) are Cytoplasmic-facing. The interaction with CALM stretch occupies residues 227 to 237 (LKSVSERLSIL). Residues Ser235, Ser243, and Ser245 each carry the phosphoserine modification. The interval 240–263 (ARPSDSNGQPEGTGEPVELKTQAL) is disordered. At Asn246 the chain carries Deamidated asparagine.

Belongs to the MIP/aquaporin (TC 1.A.8) family. As to quaternary structure, homotetramer; each monomer provides an independent water pore. Two homotetramers on opposing membranes can dimerize, forming a cell-cell junction. Interacts with CALM; the calcium-calmodulin/CALM complex interacts with the cytoplasmic domains of two aquaporins, leading to channel closure. Interacts with BFSP1 (via C-terminus); prevents calcium-dependent inhibition of the water channel activity. Post-translationally, subject to partial proteolytic cleavage in the eye lens core. Partial proteolysis promotes interactions between tetramers from adjoining membranes. In terms of processing, fatty acylated at Met-1 and Lys-238. The acyl modifications, in decreasing order of ion abundance, are: oleoyl (C18:1) &gt; palmitoyl (C16:0) &gt; stearoyl (C18:0) &gt; eicosenoyl (C20:1) &gt; dihomo-gamma-linolenoyl (C20:3) &gt; palmitoleoyl (C16:1) &gt; eicosadienoyl (C20:2).

It localises to the cell membrane. The protein resides in the cell junction. The catalysed reaction is H2O(in) = H2O(out). With respect to regulation, the water channel activity is inhibited by calcium through calmodulin/CALM. Its function is as follows. Aquaporins form homotetrameric transmembrane channels, with each monomer independently mediating water transport across the plasma membrane along its osmotic gradient. Specifically expressed in lens fiber cells, this aquaporin is crucial for maintaining lens water homeostasis and transparency. Beyond water permeability, it also acts as a cell-to-cell adhesion molecule, forming thin junctions between lens fiber cells that are essential for maintaining the ordered structure and transparency of the lens. In Canis lupus familiaris (Dog), this protein is Lens fiber major intrinsic protein.